Reading from the N-terminus, the 557-residue chain is Dihydroxy-acid dehydratase (557 aa).

Aspartate 78 provides a ligand contact to Mg(2+). [2Fe-2S] cluster is bound at residue cysteine 119. Mg(2+) contacts are provided by aspartate 120 and lysine 121. At lysine 121 the chain carries N6-carboxylysine. Cysteine 192 lines the [2Fe-2S] cluster pocket. Mg(2+) is bound at residue glutamate 442. Catalysis depends on serine 468, which acts as the Proton acceptor.

Belongs to the IlvD/Edd family. In terms of assembly, homodimer. [2Fe-2S] cluster is required as a cofactor. It depends on Mg(2+) as a cofactor.

The catalysed reaction is (2R)-2,3-dihydroxy-3-methylbutanoate = 3-methyl-2-oxobutanoate + H2O. The enzyme catalyses (2R,3R)-2,3-dihydroxy-3-methylpentanoate = (S)-3-methyl-2-oxopentanoate + H2O. It participates in amino-acid biosynthesis; L-isoleucine biosynthesis; L-isoleucine from 2-oxobutanoate: step 3/4. It functions in the pathway amino-acid biosynthesis; L-valine biosynthesis; L-valine from pyruvate: step 3/4. In terms of biological role, functions in the biosynthesis of branched-chain amino acids. Catalyzes the dehydration of (2R,3R)-2,3-dihydroxy-3-methylpentanoate (2,3-dihydroxy-3-methylvalerate) into 2-oxo-3-methylpentanoate (2-oxo-3-methylvalerate) and of (2R)-2,3-dihydroxy-3-methylbutanoate (2,3-dihydroxyisovalerate) into 2-oxo-3-methylbutanoate (2-oxoisovalerate), the penultimate precursor to L-isoleucine and L-valine, respectively. This chain is Dihydroxy-acid dehydratase, found in Bacillus cereus (strain AH187).